The sequence spans 288 residues: NGG1-interacting factor 3 (288 aa).

The protein belongs to the GTP cyclohydrolase I type 2/NIF3 family. In terms of assembly, may interact with NGG1.

It is found in the mitochondrion. The polypeptide is NGG1-interacting factor 3 (Saccharomyces cerevisiae (strain ATCC 204508 / S288c) (Baker's yeast)).